Here is a 336-residue protein sequence, read N- to C-terminus: Ankyrin repeat and SOCS box protein 1 (336 aa).

ANK repeat units lie at residues 37–69 (CDDTRLHDAAYVGDLQTLRNLLQEESYRSRINE), 78–107 (LPCTPLRIAATAGHGNCVDFLIRKGAEVDL), 111–140 (KGQTALYVAVVNGHLESTEILLEAGADPNG), 144–173 (HRSTPVYHASRVGRDDILKALIRYGADVDV), 192–221 (LVVCPLYISAAYHNLQCFRLLLQAGANPDF), and 236–266 (SPGCVMDAVLRHGCEAAFVSLLVEFGANLNL). One can recognise an SOCS box domain in the interval 287 to 336 (LQVFKEARSIPRTLLSLCRVAVRRALGKYRLHLVPSLPLPDPIKKFLLYE).

This sequence belongs to the ankyrin SOCS box (ASB) family. As to quaternary structure, interacts with CUL5 and RNF7. As to expression, highest expression in testis, spleen, bone marrow and salivary gland.

The protein operates within protein modification; protein ubiquitination. Probable substrate-recognition component of a SCF-like ECS (Elongin-Cullin-SOCS-box protein) E3 ligase complex which mediates the ubiquitination and subsequent proteasomal degradation of target proteins. Mediates Notch-induced ubiquitination and degradation of TCF3/E2A and JAK2. May play a role in testis development. The protein is Ankyrin repeat and SOCS box protein 1 (Asb1) of Mus musculus (Mouse).